We begin with the raw amino-acid sequence, 314 residues long: Basic leucine zipper 63 (314 aa).

Ser-29 bears the Phosphoserine; by KIN10 mark. Residues Lys-94–Ser-177 form a disordered region. The segment covering Gln-96–Glu-133 has biased composition (polar residues). Positions Asn-151–Leu-214 constitute a bZIP domain. The interval Lys-153–Lys-172 is basic motif. Positions Val-155–Arg-162 match the Nuclear localization signal 1 motif. The tract at residues Leu-179 to Leu-193 is leucine-zipper. The tract at residues Ser-253 to Ile-274 is disordered. Ser-294 and Ser-300 each carry phosphoserine; by KIN10. The Nuclear localization signal 2 signature appears at Met-295–Glu-302.

The protein belongs to the bZIP family. Homodimer. Forms a heterodimer with LSD1, BZIP1, BZIP2, BZIP9, BZIP10, BZIP11, BZIP25, BZIP44 and BZIP53. Interacts with KIN10 and SNF4. Component of a ternary complex composed of BZIP2-BZIP63 heterodimer and KIN10. Phosphorylated. The phosphorylation at Ser-29, Ser-294 and Ser-300 by KIN10 strongly enhances its ability to form homo- as well as heterodimers and are then essential for its transcriptional activity. In terms of tissue distribution, expressed in roots, shoots, young leaves, pollen, and flowers.

Its subcellular location is the nucleus. Its activity is regulated as follows. Up-regulated by KIN10 under a phosphorylation-dependent manner. Functionally, transcription factor involved in controlling responses to starvation. BZIP2-BZIP63-KIN10 complex binds to the ETFQO promoter to up-regulate its transcription. The protein is Basic leucine zipper 63 (BZIP63) of Arabidopsis thaliana (Mouse-ear cress).